Here is a 196-residue protein sequence, read N- to C-terminus: Peptidyl-tRNA hydrolase (196 aa).

Tyr-17 contributes to the tRNA binding site. Catalysis depends on His-22, which acts as the Proton acceptor. TRNA contacts are provided by Tyr-69, Asn-71, and Asn-117.

Belongs to the PTH family. Monomer.

Its subcellular location is the cytoplasm. The catalysed reaction is an N-acyl-L-alpha-aminoacyl-tRNA + H2O = an N-acyl-L-amino acid + a tRNA + H(+). Its function is as follows. Hydrolyzes ribosome-free peptidyl-tRNAs (with 1 or more amino acids incorporated), which drop off the ribosome during protein synthesis, or as a result of ribosome stalling. Catalyzes the release of premature peptidyl moieties from peptidyl-tRNA molecules trapped in stalled 50S ribosomal subunits, and thus maintains levels of free tRNAs and 50S ribosomes. This is Peptidyl-tRNA hydrolase from Pseudarthrobacter chlorophenolicus (strain ATCC 700700 / DSM 12829 / CIP 107037 / JCM 12360 / KCTC 9906 / NCIMB 13794 / A6) (Arthrobacter chlorophenolicus).